A 39-amino-acid polypeptide reads, in one-letter code: Photosystem II reaction center protein L (39 aa).

Residues 18–38 (SLYLGLLLVFVTGVLFSSYFF) form a helical membrane-spanning segment.

Belongs to the PsbL family. As to quaternary structure, PSII is composed of 1 copy each of membrane proteins PsbA, PsbB, PsbC, PsbD, PsbE, PsbF, PsbH, PsbI, PsbJ, PsbK, PsbL, PsbM, PsbT, PsbX, PsbY, PsbZ, Psb30/Ycf12, at least 3 peripheral proteins of the oxygen-evolving complex and a large number of cofactors. It forms dimeric complexes.

It is found in the plastid. Its subcellular location is the organellar chromatophore thylakoid membrane. Functionally, one of the components of the core complex of photosystem II (PSII). PSII is a light-driven water:plastoquinone oxidoreductase that uses light energy to abstract electrons from H(2)O, generating O(2) and a proton gradient subsequently used for ATP formation. It consists of a core antenna complex that captures photons, and an electron transfer chain that converts photonic excitation into a charge separation. This subunit is found at the monomer-monomer interface and is required for correct PSII assembly and/or dimerization. The protein is Photosystem II reaction center protein L of Paulinella chromatophora.